The following is a 440-amino-acid chain: Thymidine phosphorylase (440 aa).

Belongs to the thymidine/pyrimidine-nucleoside phosphorylase family. Homodimer.

It carries out the reaction thymidine + phosphate = 2-deoxy-alpha-D-ribose 1-phosphate + thymine. Its pathway is pyrimidine metabolism; dTMP biosynthesis via salvage pathway; dTMP from thymine: step 1/2. Its function is as follows. The enzymes which catalyze the reversible phosphorolysis of pyrimidine nucleosides are involved in the degradation of these compounds and in their utilization as carbon and energy sources, or in the rescue of pyrimidine bases for nucleotide synthesis. The protein is Thymidine phosphorylase of Shigella boydii serotype 4 (strain Sb227).